A 158-amino-acid chain; its full sequence is NAD(P)H-quinone oxidoreductase subunit J, chloroplastic (158 aa).

This sequence belongs to the complex I 30 kDa subunit family. In terms of assembly, NDH is composed of at least 16 different subunits, 5 of which are encoded in the nucleus.

It localises to the plastid. The protein resides in the chloroplast thylakoid membrane. It catalyses the reaction a plastoquinone + NADH + (n+1) H(+)(in) = a plastoquinol + NAD(+) + n H(+)(out). The catalysed reaction is a plastoquinone + NADPH + (n+1) H(+)(in) = a plastoquinol + NADP(+) + n H(+)(out). NDH shuttles electrons from NAD(P)H:plastoquinone, via FMN and iron-sulfur (Fe-S) centers, to quinones in the photosynthetic chain and possibly in a chloroplast respiratory chain. The immediate electron acceptor for the enzyme in this species is believed to be plastoquinone. Couples the redox reaction to proton translocation, and thus conserves the redox energy in a proton gradient. This Vitis vinifera (Grape) protein is NAD(P)H-quinone oxidoreductase subunit J, chloroplastic.